The sequence spans 26 residues: Phospholipase A2 homolog A1 (26 aa).

Contains 7 disulfide bonds. Expressed by the venom gland.

The protein resides in the secreted. The protein is Phospholipase A2 homolog A1 of Micrurus pyrrhocryptus (Coral snake).